A 623-amino-acid chain; its full sequence is Chaperone protein DnaK (623 aa).

At Thr175 the chain carries Phosphothreonine; by autocatalysis. The tract at residues 578 to 623 (ANPEGAPGAGFDPNNMGGANAGNASAGNDKKDDNVVDADFKVEDDK) is disordered. Low complexity predominate over residues 591-604 (NNMGGANAGNASAG). Residues 605–623 (NDKKDDNVVDADFKVEDDK) are compositionally biased toward basic and acidic residues.

This sequence belongs to the heat shock protein 70 family.

Acts as a chaperone. The sequence is that of Chaperone protein DnaK from Clostridium botulinum (strain 657 / Type Ba4).